We begin with the raw amino-acid sequence, 339 residues long: Tryptophan--tRNA ligase (339 aa).

ATP-binding positions include 11-13 and 19-20; these read QPT and GN. The 'HIGH' region motif lies at 12 to 20; that stretch reads PTGAIHIGN. An L-tryptophan-binding site is contributed by Asp135. ATP-binding positions include 147 to 149, Ile191, and 200 to 204; these read GED and KMSKS. The 'KMSKS' region motif lies at 200–204; sequence KMSKS.

It belongs to the class-I aminoacyl-tRNA synthetase family. In terms of assembly, homodimer.

Its subcellular location is the cytoplasm. The catalysed reaction is tRNA(Trp) + L-tryptophan + ATP = L-tryptophyl-tRNA(Trp) + AMP + diphosphate + H(+). Catalyzes the attachment of tryptophan to tRNA(Trp). The polypeptide is Tryptophan--tRNA ligase (Prochlorococcus marinus (strain SARG / CCMP1375 / SS120)).